Reading from the N-terminus, the 236-residue chain is Lipoarabinomannan carrier protein LprG (236 aa).

A signal peptide spans 1 to 25; the sequence is MQTRPRFAVQSLFAILATAAALVAG. Cysteine 26 carries the N-palmitoyl cysteine lipid modification. Cysteine 26 carries S-diacylglycerol cysteine lipidation.

This sequence belongs to the LppX/LprAFG lipoprotein family. Interacts with itself, Ag85A (MSMEG_6398), LppI (MSMEG_3851) and LppK (MSMEG_3904) in vivo.

The protein resides in the cell inner membrane. It is found in the secreted. The protein localises to the cell wall. In terms of biological role, helps membrane protein MSMEG_3069/MSMEI_2992 (P55) transport triacylglycerides (TAG) across the inner cell membrane into the periplasm and probably ultimately to the outer membrane. Binds TAG in its hydrophobic cavity and transfers it between lipid bilayers. TAG probably regulates lipid metabolism and growth regulation and plays a structural role in the outer membrane. Also binds mannosides, lipoarabinomannan and lipomannan and various glycolipids in the same cavity. Required for MSMEG_3069/MSMEI_2992 export activity. Export of ethidium bromide by MSMEG_3069/MSMEI_2992 can be complemented by the equivalent operon from M.tuberculosis (lprG-Rv1410c). Involved in mycolylation. The polypeptide is Lipoarabinomannan carrier protein LprG (Mycolicibacterium smegmatis (strain ATCC 700084 / mc(2)155) (Mycobacterium smegmatis)).